Reading from the N-terminus, the 199-residue chain is Pyridoxal 5'-phosphate synthase subunit PdxT (199 aa).

An L-glutamine-binding site is contributed by 49–51 (GES). Cys81 serves as the catalytic Nucleophile. L-glutamine-binding positions include Arg110 and 139 to 140 (IR). Active-site charge relay system residues include His175 and Glu177.

The protein belongs to the glutaminase PdxT/SNO family. As to quaternary structure, in the presence of PdxS, forms a dodecamer of heterodimers. Only shows activity in the heterodimer.

It carries out the reaction aldehydo-D-ribose 5-phosphate + D-glyceraldehyde 3-phosphate + L-glutamine = pyridoxal 5'-phosphate + L-glutamate + phosphate + 3 H2O + H(+). It catalyses the reaction L-glutamine + H2O = L-glutamate + NH4(+). It functions in the pathway cofactor biosynthesis; pyridoxal 5'-phosphate biosynthesis. Its function is as follows. Catalyzes the hydrolysis of glutamine to glutamate and ammonia as part of the biosynthesis of pyridoxal 5'-phosphate. The resulting ammonia molecule is channeled to the active site of PdxS. The protein is Pyridoxal 5'-phosphate synthase subunit PdxT of Frankia casuarinae (strain DSM 45818 / CECT 9043 / HFP020203 / CcI3).